Consider the following 196-residue polypeptide: MIFSISKRKLICGFLLVILTIGGVLGGVYLVTKNNKDNYQNESNFNNQEQISKIPNFKAIGPETQRILRERNYPLDDSGYYVYKYGEINRYLRNESELDELINYRVMVPSLKLHHKRVNFDKAFLESKLRKWIIKAIKQHNYFQHFENEPNLRVQYNMNIPAQKIDVNAVWSYKKDNDAATGKPIRYWDQFELKLK.

Residues Ile11–Val31 traverse the membrane as a helical segment.

The protein resides in the membrane. This is an uncharacterized protein from Mycoplasma genitalium (strain ATCC 33530 / DSM 19775 / NCTC 10195 / G37) (Mycoplasmoides genitalium).